The sequence spans 191 residues: RNA pyrophosphohydrolase (191 aa).

One can recognise a Nudix hydrolase domain in the interval 6-149 (GYRLNVGIIL…KREVYRQALS (144 aa)). The Nudix box signature appears at 38-59 (GGIKVDEDPDAAMFRELYEEVG). A disordered region spans residues 162–191 (GAQAVSDAGGTATRQIPVATEPSGPSSSQR).

Belongs to the Nudix hydrolase family. RppH subfamily. Requires a divalent metal cation as cofactor.

Accelerates the degradation of transcripts by removing pyrophosphate from the 5'-end of triphosphorylated RNA, leading to a more labile monophosphorylated state that can stimulate subsequent ribonuclease cleavage. This Methylococcus capsulatus (strain ATCC 33009 / NCIMB 11132 / Bath) protein is RNA pyrophosphohydrolase.